Here is a 331-residue protein sequence, read N- to C-terminus: Ferredoxin--NADP reductase 2 (331 aa).

Positions 37, 45, 50, 90, 124, 285, and 326 each coordinate FAD.

The protein belongs to the ferredoxin--NADP reductase type 2 family. As to quaternary structure, homodimer. FAD serves as cofactor.

It carries out the reaction 2 reduced [2Fe-2S]-[ferredoxin] + NADP(+) + H(+) = 2 oxidized [2Fe-2S]-[ferredoxin] + NADPH. This chain is Ferredoxin--NADP reductase 2, found in Bacillus velezensis (strain DSM 23117 / BGSC 10A6 / LMG 26770 / FZB42) (Bacillus amyloliquefaciens subsp. plantarum).